Reading from the N-terminus, the 127-residue chain is DNA-directed RNA polymerase subunit omega (127 aa).

Belongs to the RNA polymerase subunit omega family. The RNAP catalytic core consists of 2 alpha, 1 beta, 1 beta' and 1 omega subunit. When a sigma factor is associated with the core the holoenzyme is formed, which can initiate transcription.

The enzyme catalyses RNA(n) + a ribonucleoside 5'-triphosphate = RNA(n+1) + diphosphate. Functionally, promotes RNA polymerase assembly. Latches the N- and C-terminal regions of the beta' subunit thereby facilitating its interaction with the beta and alpha subunits. In Rickettsia rickettsii (strain Iowa), this protein is DNA-directed RNA polymerase subunit omega.